Reading from the N-terminus, the 101-residue chain is Small ribosomal subunit protein uS14 (101 aa).

Belongs to the universal ribosomal protein uS14 family. As to quaternary structure, part of the 30S ribosomal subunit. Contacts proteins S3 and S10.

Its function is as follows. Binds 16S rRNA, required for the assembly of 30S particles and may also be responsible for determining the conformation of the 16S rRNA at the A site. The chain is Small ribosomal subunit protein uS14 from Cupriavidus metallidurans (strain ATCC 43123 / DSM 2839 / NBRC 102507 / CH34) (Ralstonia metallidurans).